A 1040-amino-acid chain; its full sequence is Multidrug resistance protein MdtB (1040 aa).

The next 12 helical transmembrane spans lie at 16-36 (FIMR…AGII), 347-367 (LMMA…NIPA), 369-389 (IIPG…MVFL), 396-416 (LTLM…IVVI), 440-460 (IGFT…PLLF), 472-492 (FAIT…TLTP), 537-557 (WLTL…WVFI), 863-883 (LGST…VLGI), 888-908 (FIHP…ALLA), 911-931 (IAGS…IGIV), 968-988 (ILMT…STGV), and 998-1018 (IGMV…TPVI).

Belongs to the resistance-nodulation-cell division (RND) (TC 2.A.6) family. MdtB subfamily. As to quaternary structure, part of a tripartite efflux system composed of MdtA, MdtB and MdtC. MdtB forms a heteromultimer with MdtC.

The protein resides in the cell inner membrane. The polypeptide is Multidrug resistance protein MdtB (Shigella sonnei (strain Ss046)).